We begin with the raw amino-acid sequence, 342 residues long: Phospho-N-acetylmuramoyl-pentapeptide-transferase (342 aa).

10 helical membrane passes run 8–28 (VAQP…VIAP), 58–78 (GIPS…TAIF), 86–106 (IWVI…DDYL), 116–136 (ISLE…LIFL), 152–172 (GLID…VGSS), 184–204 (LATL…HLSL), 213–233 (VVGA…LSFL), 242–262 (VFMG…MSVM), 267–287 (FIYA…MAQV), and 318–338 (IVTR…AAII).

Belongs to the glycosyltransferase 4 family. MraY subfamily. Mg(2+) is required as a cofactor.

Its subcellular location is the cell inner membrane. It carries out the reaction UDP-N-acetyl-alpha-D-muramoyl-L-alanyl-gamma-D-glutamyl-meso-2,6-diaminopimeloyl-D-alanyl-D-alanine + di-trans,octa-cis-undecaprenyl phosphate = di-trans,octa-cis-undecaprenyl diphospho-N-acetyl-alpha-D-muramoyl-L-alanyl-D-glutamyl-meso-2,6-diaminopimeloyl-D-alanyl-D-alanine + UMP. It participates in cell wall biogenesis; peptidoglycan biosynthesis. Functionally, catalyzes the initial step of the lipid cycle reactions in the biosynthesis of the cell wall peptidoglycan: transfers peptidoglycan precursor phospho-MurNAc-pentapeptide from UDP-MurNAc-pentapeptide onto the lipid carrier undecaprenyl phosphate, yielding undecaprenyl-pyrophosphoryl-MurNAc-pentapeptide, known as lipid I. In Anaplasma marginale (strain Florida), this protein is Phospho-N-acetylmuramoyl-pentapeptide-transferase.